The following is a 502-amino-acid chain: MNAEPPEEKAASEAEAGAMPEKRAGSRAAGGNSLQGFGRPSVYHAAIVIFLEFFAWGLLTTSMLTVLHETFPQHTFLMNGLIQGVKGLLSFLSAPLIGALSDVWGRKPFLLGTVFFTCFPIPLMRISPWWYFAMISISGVFSVTFSVIFAYVADVTQEHERSTAYGWVSATFAASLVSSPAIGAYLSASYGDSLVVLVATVVALLDICFILLAVPESLPEKMRPLSWGARISWKQADPFASLKKVGKDSTILLICITVFLSYLPEAGQYSSFFLYLRQVIGFGSIKIAAFIAMVGILSIVAQTVFLTSLMRSLGNKNTVLLGLGFQMFQLAWYGFGSQAWMMWAAGIVAAVSSITFPAVSTLVSQNADSNQQGVAQGIITGIRGLCNGLGPALYGFIFYMFHVELTELEPELISNNAALQGAVIPGPPFLFGACIVFMSFLVAVFIPEYSKGGIQKHSNSISGSLANTPERGSDEDIEPLLQDSSIWELSSLEEPGHQCTEL.

A compositionally biased stretch (basic and acidic residues) spans 1 to 12; it reads MNAEPPEEKAAS. The segment at 1-27 is disordered; it reads MNAEPPEEKAASEAEAGAMPEKRAGSR. Residues 1-46 are Extracellular-facing; it reads MNAEPPEEKAASEAEAGAMPEKRAGSRAAGGNSLQGFGRPSVYHAA. Residues 47-67 traverse the membrane as a helical segment; it reads IVIFLEFFAWGLLTTSMLTVL. Residues 68-79 are Cytoplasmic-facing; that stretch reads HETFPQHTFLMN. The chain crosses the membrane as a helical span at residues 80–100; sequence GLIQGVKGLLSFLSAPLIGAL. The Extracellular segment spans residues 101–108; it reads SDVWGRKP. The chain crosses the membrane as a helical span at residues 109 to 129; that stretch reads FLLGTVFFTCFPIPLMRISPW. The Cytoplasmic portion of the chain corresponds to 130-131; that stretch reads WY. The helical transmembrane segment at 132 to 152 threads the bilayer; sequence FAMISISGVFSVTFSVIFAYV. The Extracellular segment spans residues 153–165; it reads ADVTQEHERSTAY. Residues 166–186 form a helical membrane-spanning segment; it reads GWVSATFAASLVSSPAIGAYL. Topologically, residues 187-193 are cytoplasmic; the sequence is SASYGDS. A helical membrane pass occupies residues 194–214; the sequence is LVVLVATVVALLDICFILLAV. The Extracellular segment spans residues 215–248; sequence PESLPEKMRPLSWGARISWKQADPFASLKKVGKD. Residues 249–269 form a helical membrane-spanning segment; sequence STILLICITVFLSYLPEAGQY. At 270 to 278 the chain is on the cytoplasmic side; it reads SSFFLYLRQ. The helical transmembrane segment at 279 to 299 threads the bilayer; it reads VIGFGSIKIAAFIAMVGILSI. The Extracellular portion of the chain corresponds to 300-316; that stretch reads VAQTVFLTSLMRSLGNK. Residues 317–337 form a helical membrane-spanning segment; it reads NTVLLGLGFQMFQLAWYGFGS. Gln338 is a topological domain (cytoplasmic). A helical membrane pass occupies residues 339 to 359; it reads AWMMWAAGIVAAVSSITFPAV. The Extracellular segment spans residues 360 to 384; the sequence is STLVSQNADSNQQGVAQGIITGIRG. The chain crosses the membrane as a helical span at residues 385-405; that stretch reads LCNGLGPALYGFIFYMFHVEL. Over 406–425 the chain is Cytoplasmic; the sequence is TELEPELISNNAALQGAVIP. A helical membrane pass occupies residues 426 to 446; the sequence is GPPFLFGACIVFMSFLVAVFI. Topologically, residues 447–502 are extracellular; sequence PEYSKGGIQKHSNSISGSLANTPERGSDEDIEPLLQDSSIWELSSLEEPGHQCTEL.

This sequence belongs to the major facilitator superfamily.

It localises to the membrane. The protein is Hippocampus abundant transcript-like protein 1 of Bos taurus (Bovine).